We begin with the raw amino-acid sequence, 464 residues long: Na(+)/H(+) antiporter NhaA (464 aa).

12 helical membrane-spanning segments follow: residues glycine 37–cysteine 57, isoleucine 82–isoleucine 102, valine 118–phenylalanine 138, valine 145–leucine 165, alanine 176–phenylalanine 196, asparagine 200–asparagine 220, alanine 226–valine 246, alanine 248–threonine 268, isoleucine 321–valine 341, valine 360–valine 380, valine 396–leucine 416, and isoleucine 430–isoleucine 450.

This sequence belongs to the NhaA Na(+)/H(+) (TC 2.A.33) antiporter family.

Its subcellular location is the cell inner membrane. It carries out the reaction Na(+)(in) + 2 H(+)(out) = Na(+)(out) + 2 H(+)(in). In terms of biological role, na(+)/H(+) antiporter that extrudes sodium in exchange for external protons. This Dichelobacter nodosus (strain VCS1703A) protein is Na(+)/H(+) antiporter NhaA.